Here is a 366-residue protein sequence, read N- to C-terminus: Ferrochelatase (366 aa).

Histidine 210 and glutamate 293 together coordinate Fe cation.

The protein belongs to the ferrochelatase family.

The protein localises to the cytoplasm. The enzyme catalyses heme b + 2 H(+) = protoporphyrin IX + Fe(2+). The protein operates within porphyrin-containing compound metabolism; protoheme biosynthesis; protoheme from protoporphyrin-IX: step 1/1. Its function is as follows. Catalyzes the ferrous insertion into protoporphyrin IX. In Leptospira borgpetersenii serovar Hardjo-bovis (strain JB197), this protein is Ferrochelatase.